The following is a 273-amino-acid chain: 2,3,4,5-tetrahydropyridine-2,6-dicarboxylate N-succinyltransferase (273 aa).

It belongs to the transferase hexapeptide repeat family.

Its subcellular location is the cytoplasm. It carries out the reaction (S)-2,3,4,5-tetrahydrodipicolinate + succinyl-CoA + H2O = (S)-2-succinylamino-6-oxoheptanedioate + CoA. The protein operates within amino-acid biosynthesis; L-lysine biosynthesis via DAP pathway; LL-2,6-diaminopimelate from (S)-tetrahydrodipicolinate (succinylase route): step 1/3. This is 2,3,4,5-tetrahydropyridine-2,6-dicarboxylate N-succinyltransferase from Acinetobacter baumannii (strain AB307-0294).